We begin with the raw amino-acid sequence, 165 residues long: Neurotrophin-3 (165 aa).

Residues Ile-1–Ser-3 form the signal peptide. Positions Thr-4–Arg-119 are excised as a propeptide. A disordered region spans residues Lys-32–Lys-61. N-linked (GlcNAc...) asparagine glycosylation occurs at Asn-112.

Belongs to the NGF-beta family.

The protein resides in the secreted. Functionally, seems to promote the survival of visceral and proprioceptive sensory neurons. This chain is Neurotrophin-3 (NTF3), found in Xenopeltis unicolor (Sunbeam snake).